The chain runs to 176 residues: Transcriptional repressor NrdR (176 aa).

A zinc finger lies at 3–34 (CPYCGSLETQVKDSRPTDDASAIRRRRVCPDC). Positions 49–139 (LTVLKKSGRR…VYRNFREARD (91 aa)) constitute an ATP-cone domain. A disordered region spans residues 147–176 (LDGAAQPEAPSKDDGGTDEPPAKTRAPTRA).

Belongs to the NrdR family. Requires Zn(2+) as cofactor.

Functionally, negatively regulates transcription of bacterial ribonucleotide reductase nrd genes and operons by binding to NrdR-boxes. This chain is Transcriptional repressor NrdR, found in Methylocella silvestris (strain DSM 15510 / CIP 108128 / LMG 27833 / NCIMB 13906 / BL2).